Here is a 478-residue protein sequence, read N- to C-terminus: Glutamine synthetase (478 aa).

An Isoglutamyl lysine isopeptide (Lys-Gln) (interchain with Q-Cter in protein Pup) cross-link involves residue Lys-14. A GS beta-grasp domain is found at 16 to 100 (ENVEYVDIRF…MNFFVHDPFT (85 aa)). The 371-residue stretch at 108 to 478 (PRNVARKAEN…PYEFSLYYDV (371 aa)) folds into the GS catalytic domain. Glu-133 and Glu-135 together coordinate Mg(2+). Residue Glu-214 participates in ATP binding. Residues Glu-219 and Glu-227 each contribute to the Mg(2+) site. An ATP-binding site is contributed by 230 to 232 (YKF). L-glutamate contacts are provided by residues 271-272 (NG) and Gly-272. Position 276 (His-276) interacts with Mg(2+). ATP contacts are provided by residues 278–280 (HQS) and Ser-280. 3 residues coordinate L-glutamate: Arg-329, Glu-335, and Arg-347. The ATP site is built by Arg-347, Arg-352, and Lys-361. Position 366 (Glu-366) interacts with Mg(2+). Arg-368 serves as a coordination point for L-glutamate. Tyr-406 is modified (O-AMP-tyrosine).

Belongs to the glutamine synthetase family. As to quaternary structure, oligomer of 12 subunits arranged in the form of two hexagons. The cofactor is Mg(2+).

It localises to the cytoplasm. The enzyme catalyses L-glutamate + NH4(+) + ATP = L-glutamine + ADP + phosphate + H(+). With respect to regulation, when cellular nitrogen levels are high, the C-terminal adenylyl transferase (AT) of GlnE inhibits GlnA by covalent transfer of an adenylyl group from ATP to Tyr-406. Conversely, when nitrogen levels are low, the N-terminal adenylyl removase (AR) of GlnE activates GlnA by removing the adenylyl group by phosphorolysis. The fully adenylated enzyme complex is inactive. Its function is as follows. Involved in nitrogen metabolism via ammonium assimilation. Catalyzes the ATP-dependent biosynthesis of glutamine from glutamate and ammonia. The polypeptide is Glutamine synthetase (Mycolicibacterium smegmatis (strain ATCC 700084 / mc(2)155) (Mycobacterium smegmatis)).